Here is a 677-residue protein sequence, read N- to C-terminus: Opioid growth factor receptor (677 aa).

At Met1 the chain carries N-acetylmethionine. A compositionally biased stretch (acidic residues) spans 1-29; the sequence is MDDPDCDSTWEEDEEDAEDAEDEDCEDGE. Positions 1–63 are disordered; sequence MDDPDCDSTW…SSFQSRMTGS (63 aa). The span at 54–63 shows a compositional bias: polar residues; the sequence is SSFQSRMTGS. A Bipartite nuclear localization signal motif is present at residues 267-283; sequence RRQLVHFAWEHFRPRCK. The interval 295-407 is disordered; that stretch reads FKPSSLPHPL…EPGPQSASEV (113 aa). Phosphoserine is present on residues Ser299 and Ser315. Basic and acidic residues-rich tracts occupy residues 305–323 and 331–345; these read EGSR…DHEA and GPEH…DEGP. A phosphoserine mark is found at Ser349, Ser361, Ser378, Ser382, Ser403, and Ser420. The span at 361-395 shows a compositional bias: basic and acidic residues; that stretch reads SQGDEAGGHGEDRPEPLSPKESKKRKLELSRREQP. The span at 421–431 shows a compositional bias: polar residues; it reads QGSLRTGTQEV. The interval 421–677 is disordered; it reads QGSLRTGTQE…VESSAKSGKP (257 aa). The segment covering 466-476 has biased composition (low complexity); it reads GDSAAVASGGA. Phosphoserine is present on Ser484. 7 consecutive repeat copies span residues 517-536, 537-556, 557-576, 577-596, 597-616, 617-636, and 637-656. The segment at 517 to 656 is 7 X 20 AA approximate tandem repeats of [ST]-P-S-E-T-P-G-P-[SR]-P-A-G-P-[AT]-[GR]-D-E-P-A-[EK]; the sequence is SPSETPGPSP…AGPTRDEPAK (140 aa). Over residues 528–538 the composition is skewed to low complexity; sequence GPAGDEPAESP. A phosphoserine mark is found at Ser537 and Ser557. Ser617 and Ser637 each carry phosphoserine.

It belongs to the opioid growth factor receptor family. Highly expressed in the heart and liver, moderately in skeletal muscle and kidney and to a lesser extent in brain and pancreas. Expressed in fetal tissues including liver and kidney.

Its subcellular location is the cytoplasm. The protein localises to the nucleus. Its function is as follows. Receptor for opioid growth factor (OGF), also known as Met-enkephalin. Seems to be involved in growth regulation. This is Opioid growth factor receptor (OGFR) from Homo sapiens (Human).